Here is a 396-residue protein sequence, read N- to C-terminus: MQDSSLNNYANHKNFILMLIILFLMEFARGMYILSYINFLPTVTSIAVAITSLAFSIHFIADASTNFVIGFLLKKFGTKIVLTTGFILAFTSLFLVIWFPASPFVIIFSAMMLGIAVSPIWVIMLSSVEEDKRGKQMGYVYFSWLLGLLVGMVFMNLLIKVHPTRFAFMMSLVVLIAWILYYFVDVKLTNYNTRPVKAQLRQIVDVTKRHLLLFPGILLQGAAIAALVPILPTYATKVINVSTIEYTVAIIIGGIGCAVSMLFLSKLIDNRSRNFMYGVILSGFILYMILIFTLSMIVNIHIVWIIALAIGLMYGILLPAWNTFMARFIKSDEQEETWGVFNSIQGFGSMIGPLFGGLITQFTNDLNNTFYFSALIFLVLAVFYGSYFIANREKAK.

12 helical membrane passes run 15–34 (FILM…MYIL), 46–73 (IAVA…GFLL), 80–99 (IVLT…VIWF), 105–126 (VIIF…IMLS), 138–159 (GYVY…NLLI), 165–184 (RFAF…YYFV), 211–231 (LLLF…VPIL), 243–264 (TIEY…MLFL), 276–298 (MYGV…SMIV), 304–326 (WIIA…TFMA), 338–358 (WGVF…FGGL), and 370–390 (FYFS…YFIA).

This sequence belongs to the major facilitator superfamily. LtaA family.

The protein resides in the cell membrane. It participates in cell wall biogenesis; lipoteichoic acid biosynthesis. Its function is as follows. Proton-coupled antiporter flippase that catalyzes the translocation, from the inner to the outer leaflet of the cell membrane, of the lipid-linked disaccharide (anchor-LLD) that anchors lipoteichoic acids (LTA) to the cell membrane. This chain is Proton-coupled antiporter flippase LtaA (ltaA), found in Staphylococcus aureus (strain Mu50 / ATCC 700699).